We begin with the raw amino-acid sequence, 573 residues long: MKRISPLNTLFYLSLFFSYTFKGLKCTRIYKIGTKALPCSECHDVFDCTGCLFEEKESSHVIPLKLNKKNPNDHKKLQKHHESLKLGDVKYYVNRGEGISGSLGTSSGNTLDDMDLINEEINKKRTNAQLDEKNFLDFTTYNKNKAQDISDHLSDIQKHVYEQDAQKGNKNFTNNENNSDNENNSDNENNSDNENNLDNENNLDNENNSDNSSIEKNFIALENKNATVEQTKENIFLVPLKHLRDSQFVGELLVGTPPQTVYPIFDTGSTNVWVVTTACEEESCKKVRRYDPNKSKTFRRSFIEKNLHIVFGSGSISGSVGTDTFMLGKHLVRNQTFGLVESESNNNKNGGDNIFDYISFEGIVGLGFPGMLSAGNIPFFDNLLKQNPNVDPQFSFYISPYDGKSTLIIGGISKSFYEGDIYMLPVLKESYWEVKLDELYIGKERICCDEESYVIFDTGTSYNTMPSSQMKTFLNLIHSTACTEQNYKDILKSYPIIKYVFGELIIELHPEEYMILNDDVCMPAYMQIDVPSERNHAYLLGSLSFMRNFFTVFVRGTESRPSMVGVARAKSKN.

The first 26 residues, 1–26 (MKRISPLNTLFYLSLFFSYTFKGLKC), serve as a signal peptide directing secretion. The propeptide occupies 27–221 (TRIYKIGTKA…SSIEKNFIAL (195 aa)). Intrachain disulfides connect cysteine 39–cysteine 51 and cysteine 42–cysteine 48. Residues 167-211 (KGNKNFTNNENNSDNENNSDNENNSDNENNLDNENNLDNENNSDN) form a disordered region. Positions 183–203 (NNSDNENNSDNENNLDNENNL) are enriched in acidic residues. In terms of domain architecture, Peptidase A1 spans 248-567 (FVGELLVGTP…ESRPSMVGVA (320 aa)). The active site involves aspartate 266. Cysteines 279 and 284 form a disulfide. Residue asparagine 334 is glycosylated (N-linked (GlcNAc...) asparagine). The cysteines at positions 447 and 448 are disulfide-linked. The active site involves aspartate 457. A disulfide bond links cysteine 482 and cysteine 521.

It belongs to the peptidase A1 family. In terms of processing, autocleaved into a p16 prodomain form and two mature forms p44 and p51.

It localises to the cytoplasmic vesicle. It is found in the secretory vesicle. Its activity is regulated as follows. Inhibited by aminohydantoin compounds such as CWHM-117. In terms of biological role, during the asexual blood stage, processes key proteins essential for merozoite egress and invasion of host erythrocytes. Cleaves and activates proteases SUB1 and SUB2. May process members of the EBL and Rh protein families. Also cleaves apical membrane protein AMA1. During the mosquito vector stage and probably in ookinetes, cleaves CelTOS. This chain is Plasmepsin X, found in Plasmodium falciparum (isolate NF54).